The chain runs to 250 residues: Phosphoribosylaminoimidazole-succinocarboxamide synthase (250 aa).

It belongs to the SAICAR synthetase family.

The enzyme catalyses 5-amino-1-(5-phospho-D-ribosyl)imidazole-4-carboxylate + L-aspartate + ATP = (2S)-2-[5-amino-1-(5-phospho-beta-D-ribosyl)imidazole-4-carboxamido]succinate + ADP + phosphate + 2 H(+). It participates in purine metabolism; IMP biosynthesis via de novo pathway; 5-amino-1-(5-phospho-D-ribosyl)imidazole-4-carboxamide from 5-amino-1-(5-phospho-D-ribosyl)imidazole-4-carboxylate: step 1/2. This is Phosphoribosylaminoimidazole-succinocarboxamide synthase from Picosynechococcus sp. (strain ATCC 27264 / PCC 7002 / PR-6) (Agmenellum quadruplicatum).